We begin with the raw amino-acid sequence, 282 residues long: MQEIFLCSISNVRSGDCKEDCAYCTQSSHHQGAIKRYKFKDEKVVLQEARALRELGALGFCLVTSGRELDDEKCEYIAKLAKAINKEELGLHLIACCGRADLEQLEFLRDAGIHSYNHNLETSQNFFPKICTTHTWEERFITCENALRAGLGLCSGGIFGLNESWEDRIEMLRALASLSPHTTPINFFIKNPVLPIDAETLSADEALECVLLAKEFLPNARLMVAGGREVVFKDNDKQEAKLFEYGINAVVLGDYLTTKGKAPKKDIEKLLSYGLTMATSCH.

Residues 1 to 228 (MQEIFLCSIS…NARLMVAGGR (228 aa)) enclose the Radical SAM core domain. Positions 17, 21, and 24 each coordinate [4Fe-4S] cluster. Residues cysteine 61, cysteine 96, cysteine 154, and arginine 221 each coordinate [2Fe-2S] cluster.

Belongs to the radical SAM superfamily. Biotin synthase family. As to quaternary structure, homodimer. [4Fe-4S] cluster serves as cofactor. It depends on [2Fe-2S] cluster as a cofactor.

It carries out the reaction (4R,5S)-dethiobiotin + (sulfur carrier)-SH + 2 reduced [2Fe-2S]-[ferredoxin] + 2 S-adenosyl-L-methionine = (sulfur carrier)-H + biotin + 2 5'-deoxyadenosine + 2 L-methionine + 2 oxidized [2Fe-2S]-[ferredoxin]. It participates in cofactor biosynthesis; biotin biosynthesis; biotin from 7,8-diaminononanoate: step 2/2. Catalyzes the conversion of dethiobiotin (DTB) to biotin by the insertion of a sulfur atom into dethiobiotin via a radical-based mechanism. In Helicobacter pylori (strain J99 / ATCC 700824) (Campylobacter pylori J99), this protein is Biotin synthase.